Consider the following 495-residue polypeptide: Glycerol kinase (495 aa).

Thr13 is a binding site for ADP. The ATP site is built by Thr13, Thr14, and Ser15. Sn-glycerol 3-phosphate is bound at residue Thr13. Arg17 is a binding site for ADP. 4 residues coordinate sn-glycerol 3-phosphate: Arg83, Glu84, Tyr135, and Asp244. Glycerol-binding residues include Arg83, Glu84, Tyr135, Asp244, and Gln245. ADP contacts are provided by Thr266 and Gly309. Positions 266, 309, 313, and 410 each coordinate ATP. ADP-binding residues include Gly410 and Asn414.

Belongs to the FGGY kinase family.

The catalysed reaction is glycerol + ATP = sn-glycerol 3-phosphate + ADP + H(+). It participates in polyol metabolism; glycerol degradation via glycerol kinase pathway; sn-glycerol 3-phosphate from glycerol: step 1/1. Inhibited by fructose 1,6-bisphosphate (FBP). Functionally, key enzyme in the regulation of glycerol uptake and metabolism. Catalyzes the phosphorylation of glycerol to yield sn-glycerol 3-phosphate. In Shewanella amazonensis (strain ATCC BAA-1098 / SB2B), this protein is Glycerol kinase.